A 213-amino-acid polypeptide reads, in one-letter code: Probable transaldolase (213 aa).

Residue K83 is the Schiff-base intermediate with substrate of the active site.

Belongs to the transaldolase family. Type 3B subfamily.

The protein resides in the cytoplasm. The catalysed reaction is D-sedoheptulose 7-phosphate + D-glyceraldehyde 3-phosphate = D-erythrose 4-phosphate + beta-D-fructose 6-phosphate. It functions in the pathway carbohydrate degradation; pentose phosphate pathway; D-glyceraldehyde 3-phosphate and beta-D-fructose 6-phosphate from D-ribose 5-phosphate and D-xylulose 5-phosphate (non-oxidative stage): step 2/3. Transaldolase is important for the balance of metabolites in the pentose-phosphate pathway. This Geobacillus sp. (strain WCH70) protein is Probable transaldolase.